Reading from the N-terminus, the 313-residue chain is Olfactory receptor 2B6 (313 aa).

Residues 1-25 (MNWVNDSIIQEFILLGFSDRPWLEF) lie on the Extracellular side of the membrane. Asn-5 carries an N-linked (GlcNAc...) asparagine glycan. The chain crosses the membrane as a helical span at residues 26–49 (PLLVVFLISYTVTIFGNLTIILVS). Over 50–57 (RLDTKLHT) the chain is Cytoplasmic. A helical transmembrane segment spans residues 58 to 79 (PMYFFLTNLSLLDLCYTTCTVP). Over 80–100 (QMLVNLCSIRKVISYRGCVAQ) the chain is Extracellular. A disulfide bridge connects residues Cys-97 and Cys-189. The chain crosses the membrane as a helical span at residues 101–120 (LFIFLALGATEYLLLAVMSF). Residues 121–139 (DRFVAICRPLHYSVIMHQR) are Cytoplasmic-facing. The chain crosses the membrane as a helical span at residues 140–158 (LCLQLAAASWVTGFSNSVW). Residues 159–195 (LSTLTLQLPLCDPYVIDHFLCEVPALLKLSCVETTAN) lie on the Extracellular side of the membrane. A helical transmembrane segment spans residues 196-219 (EAELFLVSELFHLIPLTLILISYA). Residues 220-236 (FIVRAVLRIQSAEGRQK) are Cytoplasmic-facing. A helical transmembrane segment spans residues 237-259 (AFGTCGSHLIVVSLFYSTAVSVY). Over 260–272 (LQPPSPSSKDQGK) the chain is Extracellular. A helical membrane pass occupies residues 273–292 (MVSLFYGIIAPMLNPLIYTL). The Cytoplasmic segment spans residues 293–313 (RNKEVKEGFKRLVARVFLIKK).

It belongs to the G-protein coupled receptor 1 family.

Its subcellular location is the cell membrane. In terms of biological role, odorant receptor. The polypeptide is Olfactory receptor 2B6 (Homo sapiens (Human)).